Consider the following 431-residue polypeptide: Glutamate--tRNA ligase 1 (431 aa).

Positions 6-16 (PSPTGDMHIGN) match the 'HIGH' region motif. A 'KMSKS' region motif is present at residues 235-239 (KMSKR). K238 contributes to the ATP binding site.

The protein belongs to the class-I aminoacyl-tRNA synthetase family. Glutamate--tRNA ligase type 1 subfamily. In terms of assembly, monomer.

It is found in the cytoplasm. It carries out the reaction tRNA(Glu) + L-glutamate + ATP = L-glutamyl-tRNA(Glu) + AMP + diphosphate. Catalyzes the attachment of glutamate to tRNA(Glu) in a two-step reaction: glutamate is first activated by ATP to form Glu-AMP and then transferred to the acceptor end of tRNA(Glu). The polypeptide is Glutamate--tRNA ligase 1 (Campylobacter jejuni (strain RM1221)).